A 503-amino-acid polypeptide reads, in one-letter code: NAD-dependent protein deacetylase HST1 (503 aa).

A Deacetylase sirtuin-type domain is found at 183-468; sequence RLPNFNTIDH…SLVAKKCHWD (286 aa). NAD(+) contacts are provided by residues 208-227 and 290-293; these read GAGV…EGFY and QNID. The active-site Proton acceptor is His-310. Zn(2+) is bound by residues Cys-318, Cys-321, Cys-342, and Cys-345. NAD(+) is bound by residues 412–414, 437–439, and Cys-454; these read GTS and NRD.

It belongs to the sirtuin family. Class I subfamily. Identified in the Set3C complex with HOS2, SIF2, SNT1, CPR1, HOS4/YIL112W and SET3. Its presence is however not essential for meiotic repression by the Set3C complex. Interacts with SUM1 and RFM1. The interaction with SUM1 is mediated by RFM1. Zn(2+) serves as cofactor.

Its subcellular location is the nucleus. The enzyme catalyses N(6)-acetyl-L-lysyl-[protein] + NAD(+) + H2O = 2''-O-acetyl-ADP-D-ribose + nicotinamide + L-lysyl-[protein]. NAD-dependent histone deacetylase involved in telomeric silencing. Histone deacetylase proteins act via the formation of large multiprotein complexes that are responsible for the deacetylation of lysine residues on the N-terminal part of the core histones (H2A, H2B, H3 and H4). Histone deacetylation gives a tag for epigenetic repression and plays an important role in transcriptional regulation, cell cycle progression and developmental events. Restores silencing at HMR in SIR2 mutants when overexpressed. Required to repress middle sporulation genes during vegetative growth. Acts as a sensor of NAD(+) levels and regulator of NAD(+) biosynthesis. Regulates the gene expression of de novo NAD(+) biosynthesis genes. The protein is NAD-dependent protein deacetylase HST1 (HST1) of Saccharomyces cerevisiae (strain ATCC 204508 / S288c) (Baker's yeast).